Consider the following 233-residue polypeptide: Bcl-2-like protein 1 (233 aa).

The short motif at 4-24 (SNRELVVDFLSYKLSQKGYSW) is the BH4 element. The interval 28-71 (SDVEENRTEAPEGTESEMETPSAINGNPSWHLADSPAVNGATGH) is disordered. At Ser49 the chain carries Phosphoserine; by PLK3. Phosphoserine; by CDK1 is present on Ser62. The BH3 motif lies at 86–100 (VKQALREAGDEFELR). The BH1 signature appears at 129–148 (ELFRDGVNWGRIVAFFSFGG). The short motif at 180–195 (PWIQENGGWDTFVELY) is the BH2 element. A helical transmembrane segment spans residues 210–226 (FNRWFLTGMTVAGVVLL).

Belongs to the Bcl-2 family. Homodimer. Interacts with BCL2L11. Interacts with BAD. Interacts with PGAM5. Interacts with HEBP2. Interacts with p53/TP53 and BBC3; interaction with BBC3 disrupts the interaction with p53/TP53. Interacts with ATP5F1A and ATP5F1B; the interactions mediate the association of isoform Bcl-X(L) with the mitochondrial membrane ATP synthase F(1)F(0) ATP synthase. Interacts with VDAC1. Interacts with BCL2L11 (via BH3). Interacts with RNF183. Interacts with GIMAP3/IAN4 and GIMAP5/IAN5. Interacts with GIMAP5 and HSPA8/HSC70; the interaction between HSPA8 and BCL2L1 is impaired in the absence of GIMAP5. Interacts with isoform 4 of CLU; this interaction releases and activates BAX and promotes cell death. In terms of assembly, forms heterodimers with BAX, BAK or BCL2; heterodimerization with BAX does not seem to be required for anti-apoptotic activity. Interacts with isoform 1 of SIVA1; the interaction inhibits the anti-apoptotic activity. Interacts with IKZF3. Interacts with RTL10/BOP. Interacts with DNM1L and CLTA; DNM1L and BCL2L1 isoform BCL-X(L) may form a complex in synaptic vesicles that also contains clathrin and MFF. Interacts (via the loop between motifs BH4 and BH3) with NLRP1 (via LRR repeats), but not with NLRP2, NLRP3, NLRP4, PYCARD, nor MEFV. Interacts with BECN1. Proteolytically cleaved by caspases during apoptosis. The cleaved protein, lacking the BH4 motif, has pro-apoptotic activity. Post-translationally, phosphorylated on Ser-62 by CDK1. This phosphorylation is partial in normal mitotic cells, but complete in G2-arrested cells upon DNA-damage, thus promoting subsequent apoptosis probably by triggering caspases-mediated proteolysis. Phosphorylated by PLK3, leading to regulate the G2 checkpoint and progression to cytokinesis during mitosis. Phosphorylation at Ser-49 appears during the S phase and G2, disappears rapidly in early mitosis during prometaphase, metaphase and early anaphase, and re-appears during telophase and cytokinesis. In terms of processing, ubiquitinated by RNF183 during prolonged ER stress, leading to degradation by the proteosome. Bcl-X(S) is expressed at high levels in cells that undergo a high rate of turnover, such as developing lymphocytes. In contrast, Bcl-X(L) is found in tissues containing long-lived postmitotic cells, such as adult brain.

It localises to the mitochondrion inner membrane. It is found in the mitochondrion outer membrane. The protein localises to the mitochondrion matrix. Its subcellular location is the cytoplasmic vesicle. The protein resides in the secretory vesicle. It localises to the synaptic vesicle membrane. It is found in the cytoplasm. The protein localises to the cytosol. Its subcellular location is the cytoskeleton. The protein resides in the microtubule organizing center. It localises to the centrosome. It is found in the nucleus membrane. Its function is as follows. Potent inhibitor of cell death. Inhibits activation of caspases. Appears to regulate cell death by blocking the voltage-dependent anion channel (VDAC) by binding to it and preventing the release of the caspase activator, CYC1, from the mitochondrial membrane. Also acts as a regulator of G2 checkpoint and progression to cytokinesis during mitosis. In terms of biological role, isoform Bcl-X(L) also regulates presynaptic plasticity, including neurotransmitter release and recovery, number of axonal mitochondria as well as size and number of synaptic vesicle clusters. During synaptic stimulation, increases ATP availability from mitochondria through regulation of mitochondrial membrane ATP synthase F(1)F(0) activity and regulates endocytic vesicle retrieval in hippocampal neurons through association with DMN1L and stimulation of its GTPase activity in synaptic vesicles. May attenuate inflammation impairing NLRP1-inflammasome activation, hence CASP1 activation and IL1B release. Functionally, isoform Bcl-X(S) promotes apoptosis. In Homo sapiens (Human), this protein is Bcl-2-like protein 1 (BCL2L1).